The chain runs to 332 residues: Biotin synthase (332 aa).

Residues 47–273 (YYGNKVKLNM…MNPTKEIRIA (227 aa)) enclose the Radical SAM core domain. The [4Fe-4S] cluster site is built by Cys-65, Cys-69, and Cys-72. [2Fe-2S] cluster-binding residues include Cys-109, Cys-141, Cys-201, and Arg-271.

This sequence belongs to the radical SAM superfamily. Biotin synthase family. In terms of assembly, homodimer. Requires [4Fe-4S] cluster as cofactor. [2Fe-2S] cluster serves as cofactor.

The enzyme catalyses (4R,5S)-dethiobiotin + (sulfur carrier)-SH + 2 reduced [2Fe-2S]-[ferredoxin] + 2 S-adenosyl-L-methionine = (sulfur carrier)-H + biotin + 2 5'-deoxyadenosine + 2 L-methionine + 2 oxidized [2Fe-2S]-[ferredoxin]. Its pathway is cofactor biosynthesis; biotin biosynthesis; biotin from 7,8-diaminononanoate: step 2/2. Its function is as follows. Catalyzes the conversion of dethiobiotin (DTB) to biotin by the insertion of a sulfur atom into dethiobiotin via a radical-based mechanism. This chain is Biotin synthase, found in Geobacillus thermodenitrificans (strain NG80-2).